Consider the following 385-residue polypeptide: Galactokinase (385 aa).

34–37 (EHTD) provides a ligand contact to substrate. 124 to 130 (SSGLSSS) serves as a coordination point for ATP. Residues Ser130 and Glu162 each contribute to the Mg(2+) site. The active-site Proton acceptor is the Asp174. Substrate is bound at residue Tyr223.

It belongs to the GHMP kinase family. GalK subfamily.

It localises to the cytoplasm. The enzyme catalyses alpha-D-galactose + ATP = alpha-D-galactose 1-phosphate + ADP + H(+). Its pathway is carbohydrate metabolism; galactose metabolism. In terms of biological role, catalyzes the transfer of the gamma-phosphate of ATP to D-galactose to form alpha-D-galactose-1-phosphate (Gal-1-P). The protein is Galactokinase of Actinobacillus succinogenes (strain ATCC 55618 / DSM 22257 / CCUG 43843 / 130Z).